A 118-amino-acid chain; its full sequence is Basic phospholipase A2 acanthin-2 (118 aa).

7 cysteine pairs are disulfide-bonded: Cys11/Cys71, Cys27/Cys117, Cys29/Cys45, Cys44/Cys98, Cys51/Cys91, Cys60/Cys84, and Cys78/Cys89. Residues Tyr28, Gly30, and Gly32 each contribute to the Ca(2+) site. His48 is an active-site residue. Asp49 lines the Ca(2+) pocket. Asp92 is an active-site residue.

The cofactor is Ca(2+). In terms of tissue distribution, expressed by the venom gland.

It is found in the secreted. The catalysed reaction is a 1,2-diacyl-sn-glycero-3-phosphocholine + H2O = a 1-acyl-sn-glycero-3-phosphocholine + a fatty acid + H(+). Its function is as follows. Snake venom phospholipase A2 (PLA2) that potently inhibits ADP-(IC(50)=12 nM) and collagen-induced (IC(50)=4 nM) platelet aggregation when tested on human whole blood. PLA2 catalyzes the calcium-dependent hydrolysis of the 2-acyl groups in 3-sn-phosphoglycerides. The chain is Basic phospholipase A2 acanthin-2 from Acanthophis antarcticus (Common death adder).